The following is a 562-amino-acid chain: Gut esterase 1 (562 aa).

A signal peptide spans 1–16 (MRVLLASLLIFGACWA). A disulfide bridge links Cys75 with Cys93. Ser199 (acyl-ester intermediate) is an active-site residue. The cysteines at positions 251 and 259 are disulfide-linked. Residues Glu320 and His451 each act as charge relay system in the active site. Residues 559–562 (KDEL) carry the Prevents secretion from ER motif.

The protein belongs to the type-B carboxylesterase/lipase family. Expressed only in the intestine.

Its subcellular location is the endoplasmic reticulum lumen. It carries out the reaction a carboxylic ester + H2O = an alcohol + a carboxylate + H(+). This is Gut esterase 1 (ges-1) from Caenorhabditis briggsae.